The sequence spans 182 residues: Troponin I, fast skeletal muscle (182 aa).

N-acetylglycine is present on glycine 2. The tract at residues 2–48 is involved in binding TNC; the sequence is GDEEKRNRAITARRQHLKSVMLQIAATELEKEESRRESEKENYLSEH. Threonine 12 is modified (phosphothreonine). The span at 29 to 45 shows a compositional bias: basic and acidic residues; sequence ELEKEESRRESEKENYL. The interval 29–53 is disordered; that stretch reads ELEKEESRRESEKENYLSEHCPPLH. Positions 97 to 117 are involved in binding TNC and actin; it reads NQKLFDLRGKFKRPPLRRVRM. At serine 118 the chain carries Phosphoserine.

This sequence belongs to the troponin I family. In terms of assembly, binds to actin and tropomyosin.

In terms of biological role, troponin I is the inhibitory subunit of troponin, the thin filament regulatory complex which confers calcium-sensitivity to striated muscle actomyosin ATPase activity. The protein is Troponin I, fast skeletal muscle (Tnni2) of Mus musculus (Mouse).